The primary structure comprises 122 residues: Small ribosomal subunit protein uS13 (122 aa).

A disordered region spans residues 95 to 122 (GLPVRGQKTKTNARTRKGPKRTVANKKK).

The protein belongs to the universal ribosomal protein uS13 family. As to quaternary structure, part of the 30S ribosomal subunit. Forms a loose heterodimer with protein S19. Forms two bridges to the 50S subunit in the 70S ribosome.

Its function is as follows. Located at the top of the head of the 30S subunit, it contacts several helices of the 16S rRNA. In the 70S ribosome it contacts the 23S rRNA (bridge B1a) and protein L5 of the 50S subunit (bridge B1b), connecting the 2 subunits; these bridges are implicated in subunit movement. Contacts the tRNAs in the A and P-sites. This is Small ribosomal subunit protein uS13 from Lachnoclostridium phytofermentans (strain ATCC 700394 / DSM 18823 / ISDg) (Clostridium phytofermentans).